The sequence spans 184 residues: dITP/XTP pyrophosphatase (184 aa).

A substrate-binding site is contributed by 8-13 (TGNKGK). 2 residues coordinate Mg(2+): Glu-37 and Asp-66. Asp-66 acts as the Proton acceptor in catalysis. Substrate contacts are provided by residues Ser-67, 142-145 (FGYD), Lys-163, and 168-169 (HR).

Belongs to the HAM1 NTPase family. Homodimer. Mg(2+) serves as cofactor.

It catalyses the reaction XTP + H2O = XMP + diphosphate + H(+). It carries out the reaction dITP + H2O = dIMP + diphosphate + H(+). The catalysed reaction is ITP + H2O = IMP + diphosphate + H(+). Pyrophosphatase that catalyzes the hydrolysis of nucleoside triphosphates to their monophosphate derivatives, with a high preference for the non-canonical purine nucleotides XTP (xanthosine triphosphate), dITP (deoxyinosine triphosphate) and ITP. Seems to function as a house-cleaning enzyme that removes non-canonical purine nucleotides from the nucleotide pool, thus preventing their incorporation into DNA/RNA and avoiding chromosomal lesions. In Methanosarcina mazei (strain ATCC BAA-159 / DSM 3647 / Goe1 / Go1 / JCM 11833 / OCM 88) (Methanosarcina frisia), this protein is dITP/XTP pyrophosphatase.